Here is a 442-residue protein sequence, read N- to C-terminus: D-serine dehydratase 1 (442 aa).

Residue Lys118 is modified to N6-(pyridoxal phosphate)lysine.

Belongs to the serine/threonine dehydratase family. DsdA subfamily. In terms of assembly, monomer. Pyridoxal 5'-phosphate is required as a cofactor.

The catalysed reaction is D-serine = pyruvate + NH4(+). The chain is D-serine dehydratase 1 from Escherichia coli O6:K15:H31 (strain 536 / UPEC).